A 347-amino-acid polypeptide reads, in one-letter code: Quinolinate synthase (347 aa).

Residues H47 and S68 each coordinate iminosuccinate. [4Fe-4S] cluster is bound at residue C113. Residues 139–141 and S156 each bind iminosuccinate; that span reads YAN. C200 serves as a coordination point for [4Fe-4S] cluster. Iminosuccinate-binding positions include 226–228 and T243; that span reads HPE. A [4Fe-4S] cluster-binding site is contributed by C297.

The protein belongs to the quinolinate synthase family. Type 1 subfamily. It depends on [4Fe-4S] cluster as a cofactor.

The protein resides in the cytoplasm. It catalyses the reaction iminosuccinate + dihydroxyacetone phosphate = quinolinate + phosphate + 2 H2O + H(+). It participates in cofactor biosynthesis; NAD(+) biosynthesis; quinolinate from iminoaspartate: step 1/1. Functionally, catalyzes the condensation of iminoaspartate with dihydroxyacetone phosphate to form quinolinate. The chain is Quinolinate synthase from Shigella flexneri.